The following is a 217-amino-acid chain: Adr-2-binding protein 1 (217 aa).

The interval 33–65 (ARPEPQHDSLKRRNTTSSIAKKKAKMTRGDEQI) is disordered. Residues 44 to 58 (RRNTTSSIAKKKAKM) show a composition bias toward basic residues.

In terms of assembly, interacts with double-stranded RNA-specific adenosine deaminase adr-2. Expressed in main body hypodermal cells, the hypodermal seam cells, pharynx, intestine and some neurons.

It localises to the nucleus. Functionally, required for the A-I editing activity of the double-stranded RNA-specific adenosine deaminase adr-2 by facilitating adr-2 nuclear localization. The polypeptide is Adr-2-binding protein 1 (Caenorhabditis elegans).